A 159-amino-acid chain; its full sequence is Cytochrome b6-f complex subunit 4 (159 aa).

Helical transmembrane passes span 36 to 56, 95 to 115, and 131 to 151; these read LLYI…GLAV, LLGV…PFLE, and TVFL…TLPI.

It belongs to the cytochrome b family. PetD subfamily. In terms of assembly, the 4 large subunits of the cytochrome b6-f complex are cytochrome b6, subunit IV (17 kDa polypeptide, petD), cytochrome f and the Rieske protein, while the 4 small subunits are petG, petL, petM and petN. The complex functions as a dimer.

The protein resides in the plastid. Its subcellular location is the chloroplast thylakoid membrane. Functionally, component of the cytochrome b6-f complex, which mediates electron transfer between photosystem II (PSII) and photosystem I (PSI), cyclic electron flow around PSI, and state transitions. The polypeptide is Cytochrome b6-f complex subunit 4 (Piper cenocladum (Ant piper)).